The primary structure comprises 159 residues: Protein E6 (159 aa).

Zinc fingers lie at residues cysteine 35–cysteine 71 and cysteine 108–cysteine 144.

It belongs to the papillomaviridae E6 protein family. Forms homodimers. Interacts with ubiquitin-protein ligase UBE3A/E6-AP; this interaction stimulates UBE3A ubiquitin activity. Interacts with host TP53 and EP300; this interaction inhibits TP53 activity.

Its subcellular location is the host cytoplasm. It is found in the host nucleus. In terms of biological role, plays a major role in the induction and maintenance of cellular transformation. E6 associates with host UBE3A/E6-AP ubiquitin-protein ligase and modulates its activity. Sequesters tumor suppressor TP53 in the host cytoplasm and modulates its activity by interacting with host EP300 that results in the reduction of TP53 acetylation and activation. In turn, apoptosis induced by DNA damage is inhibited. E6 also protects host keratinocytes from apoptosis by mediating the degradation of host BAK1. May also inhibit host immune response. In Homo sapiens (Human), this protein is Protein E6.